The primary structure comprises 258 residues: UDP-2,3-diacylglucosamine hydrolase (258 aa).

Positions 15, 17, 48, 88, and 123 each coordinate Mn(2+). 88 to 89 (NR) is a substrate binding site. Substrate-binding residues include Asp131, Ser169, Asn173, Lys176, and His204. Residues His204 and His206 each contribute to the Mn(2+) site.

It belongs to the LpxH family. Mn(2+) serves as cofactor.

The protein resides in the cell inner membrane. The enzyme catalyses UDP-2-N,3-O-bis[(3R)-3-hydroxytetradecanoyl]-alpha-D-glucosamine + H2O = 2-N,3-O-bis[(3R)-3-hydroxytetradecanoyl]-alpha-D-glucosaminyl 1-phosphate + UMP + 2 H(+). Its pathway is glycolipid biosynthesis; lipid IV(A) biosynthesis; lipid IV(A) from (3R)-3-hydroxytetradecanoyl-[acyl-carrier-protein] and UDP-N-acetyl-alpha-D-glucosamine: step 4/6. Hydrolyzes the pyrophosphate bond of UDP-2,3-diacylglucosamine to yield 2,3-diacylglucosamine 1-phosphate (lipid X) and UMP by catalyzing the attack of water at the alpha-P atom. Involved in the biosynthesis of lipid A, a phosphorylated glycolipid that anchors the lipopolysaccharide to the outer membrane of the cell. The polypeptide is UDP-2,3-diacylglucosamine hydrolase (Bordetella bronchiseptica (strain ATCC BAA-588 / NCTC 13252 / RB50) (Alcaligenes bronchisepticus)).